Consider the following 487-residue polypeptide: GTPase Der (487 aa).

The segment at 1 to 20 is disordered; sequence MAKAVRKSNSEETVPIKAPR. EngA-type G domains lie at 28-197 and 225-401; these read PVVS…SSKP and FRLA…SRSR. Residues 34–41, 83–87, 149–152, 231–238, 278–282, and 343–346 each bind GTP; these read GRQNVGKS, DTPGL, NKAD, GKPNSGKS, DTAGI, and NKWD. In terms of domain architecture, KH-like spans 402 to 486; sequence RKVSTSELNK…PVRLEFRSDR (85 aa).

This sequence belongs to the TRAFAC class TrmE-Era-EngA-EngB-Septin-like GTPase superfamily. EngA (Der) GTPase family. Associates with the 50S ribosomal subunit.

In terms of biological role, GTPase that plays an essential role in the late steps of ribosome biogenesis. This chain is GTPase Der, found in Leptospira borgpetersenii serovar Hardjo-bovis (strain L550).